A 542-amino-acid chain; its full sequence is Adenosylmethionine-8-amino-7-oxononanoate aminotransferase (542 aa).

Pyridoxal 5'-phosphate is bound at residue 170-171 (GS). Substrate is bound at residue Y205. Residue D311 coordinates pyridoxal 5'-phosphate. 3 residues coordinate substrate: K340, G375, and R470. K340 carries the N6-(pyridoxal phosphate)lysine modification. The disordered stretch occupies residues 509–542 (DGGLWTKRPDGPDNPDKANTPDTPDGARTGETVV). The segment covering 515–524 (KRPDGPDNPD) has biased composition (basic and acidic residues).

It belongs to the class-III pyridoxal-phosphate-dependent aminotransferase family. BioA subfamily. In terms of assembly, homodimer. Pyridoxal 5'-phosphate is required as a cofactor.

The protein resides in the cytoplasm. The catalysed reaction is (8S)-8-amino-7-oxononanoate + S-adenosyl-L-methionine = S-adenosyl-4-methylsulfanyl-2-oxobutanoate + (7R,8S)-7,8-diammoniononanoate. The protein operates within cofactor biosynthesis; biotin biosynthesis; 7,8-diaminononanoate from 8-amino-7-oxononanoate (SAM route): step 1/1. Catalyzes the transfer of the alpha-amino group from S-adenosyl-L-methionine (SAM) to 7-keto-8-aminopelargonic acid (KAPA) to form 7,8-diaminopelargonic acid (DAPA). It is the only aminotransferase known to utilize SAM as an amino donor. The polypeptide is Adenosylmethionine-8-amino-7-oxononanoate aminotransferase (Nitratidesulfovibrio vulgaris (strain ATCC 29579 / DSM 644 / CCUG 34227 / NCIMB 8303 / VKM B-1760 / Hildenborough) (Desulfovibrio vulgaris)).